The chain runs to 417 residues: MLKREMNIADYDPELWNAMEGEVTRQEEHIELIASENYTSPRVMQAQGSQLTNKYAEGYPGKRYYGGCEYVDVVEQLAIDRAKALFGADYANVQPHSGSQANAAVYMALLKPGDTVLGMNLAQGGHLTHGSPVNFSGKLYNIVPYGIDEAGKIDYQDIAEQAKKHKPKMIIGGFSAYSGLVDWAKMREIADSVGAYLFVDMAHVAGMIAAGVYPNPVPHAHVVTTTTHKTLAGPRGGLILAKGGDEEFYKKLNSAVFPGSQGGPLMHVIAGKAVALKEAMEPEFKVYQQQVAKNAKAMVDVFLARGYKVVSGGTENHLFLLDLVDKDITGKDADAALGRANITVNKNSVPNDPRSPFVTSGIRIGSPAITRRGFKEAEAKDLAGWMCDVLDNINDEANIEKVKQKVLDICAKFPVYA.

(6S)-5,6,7,8-tetrahydrofolate is bound by residues L121 and 125–127; that span reads GHL. K229 bears the N6-(pyridoxal phosphate)lysine mark. 355 to 357 is a binding site for (6S)-5,6,7,8-tetrahydrofolate; the sequence is SPF.

It belongs to the SHMT family. Homodimer. Requires pyridoxal 5'-phosphate as cofactor.

Its subcellular location is the cytoplasm. It catalyses the reaction (6R)-5,10-methylene-5,6,7,8-tetrahydrofolate + glycine + H2O = (6S)-5,6,7,8-tetrahydrofolate + L-serine. It functions in the pathway one-carbon metabolism; tetrahydrofolate interconversion. Its pathway is amino-acid biosynthesis; glycine biosynthesis; glycine from L-serine: step 1/1. Catalyzes the reversible interconversion of serine and glycine with tetrahydrofolate (THF) serving as the one-carbon carrier. This reaction serves as the major source of one-carbon groups required for the biosynthesis of purines, thymidylate, methionine, and other important biomolecules. Also exhibits THF-independent aldolase activity toward beta-hydroxyamino acids, producing glycine and aldehydes, via a retro-aldol mechanism. This Proteus mirabilis (strain HI4320) protein is Serine hydroxymethyltransferase.